We begin with the raw amino-acid sequence, 66 residues long: Large ribosomal subunit protein bL33c (66 aa).

Belongs to the bacterial ribosomal protein bL33 family.

The protein resides in the plastid. It is found in the chloroplast. The protein is Large ribosomal subunit protein bL33c of Aethionema cordifolium (Lebanon stonecress).